The chain runs to 51 residues: ATP synthase subunit epsilon-like protein, mitochondrial (51 aa).

Residue Lys21 is modified to N6-acetyllysine.

This sequence belongs to the eukaryotic ATPase epsilon family. As to quaternary structure, F-type ATPases have 2 components, CF(1) - the catalytic core - and CF(0) - the membrane proton channel. CF(1) has five subunits: alpha(3), beta(3), gamma(1), delta(1), epsilon(1). CF(0) seems to have nine subunits: a, b, c, d, e, f, g, F6 and 8 (or A6L).

The protein resides in the mitochondrion inner membrane. Functionally, mitochondrial membrane ATP synthase (F(1)F(0) ATP synthase or Complex V) produces ATP from ADP in the presence of a proton gradient across the membrane which is generated by electron transport complexes of the respiratory chain. F-type ATPases consist of two structural domains, F(1) - containing the extramembraneous catalytic core, and F(0) - containing the membrane proton channel, linked together by a central stalk and a peripheral stalk. During catalysis, ATP synthesis in the catalytic domain of F(1) is coupled via a rotary mechanism of the central stalk subunits to proton translocation. Part of the complex F(1) domain and of the central stalk which is part of the complex rotary element. Rotation of the central stalk against the surrounding alpha(3)beta(3) subunits leads to hydrolysis of ATP in three separate catalytic sites on the beta subunits. The protein is ATP synthase subunit epsilon-like protein, mitochondrial of Homo sapiens (Human).